The following is a 415-amino-acid chain: Gamma-glutamyl phosphate reductase (415 aa).

It belongs to the gamma-glutamyl phosphate reductase family.

Its subcellular location is the cytoplasm. The enzyme catalyses L-glutamate 5-semialdehyde + phosphate + NADP(+) = L-glutamyl 5-phosphate + NADPH + H(+). The protein operates within amino-acid biosynthesis; L-proline biosynthesis; L-glutamate 5-semialdehyde from L-glutamate: step 2/2. Catalyzes the NADPH-dependent reduction of L-glutamate 5-phosphate into L-glutamate 5-semialdehyde and phosphate. The product spontaneously undergoes cyclization to form 1-pyrroline-5-carboxylate. The sequence is that of Gamma-glutamyl phosphate reductase from Parabacteroides distasonis (strain ATCC 8503 / DSM 20701 / CIP 104284 / JCM 5825 / NCTC 11152).